The primary structure comprises 143 residues: Ribosomal RNA large subunit methyltransferase H (143 aa).

S-adenosyl-L-methionine-binding positions include Gly95 and 111–116 (FSDLTF).

This sequence belongs to the RNA methyltransferase RlmH family. Homodimer.

The protein resides in the cytoplasm. The enzyme catalyses pseudouridine(1915) in 23S rRNA + S-adenosyl-L-methionine = N(3)-methylpseudouridine(1915) in 23S rRNA + S-adenosyl-L-homocysteine + H(+). Functionally, specifically methylates the pseudouridine at position 1915 (m3Psi1915) in 23S rRNA. This is Ribosomal RNA large subunit methyltransferase H from Metamycoplasma arthritidis (strain 158L3-1) (Mycoplasma arthritidis).